Here is a 255-residue protein sequence, read N- to C-terminus: MVKLTAELIEQAAQYTNAVRDRELDLRGYKIPVIENLGATLDQFDAIDFSDNEIRKLDGFPLLRRLKTLLVNNNRICRIGEGLDQALPCLTELILTNNSLVELGDLDPLASLKSLTYLSILRNPVTNKKHYRLYVIYKVPQVRVLDFQKVKLKERQEAEKMFKGKRGAQLAKDIARRSKTFNPGAGLPTDKKKGGPSPGDVEAIKNAIANASTLAEVERLKGLLQSGQIPGRERRSGPTDDGEEEMEEDTVTNGS.

LRR repeat units lie at residues 20 to 41 (RDRE…GATL), 43 to 64 (QFDA…PLLR), 65 to 86 (RLKT…LDQA), and 89 to 110 (CLTE…DPLA). Residues 123–161 (NPVTNKKHYRLYVIYKVPQVRVLDFQKVKLKERQEAEKM) enclose the LRRCT domain. Residue Lys172 is modified to N6-acetyllysine; alternate. A Glycyl lysine isopeptide (Lys-Gly) (interchain with G-Cter in SUMO2); alternate cross-link involves residue Lys172. A disordered region spans residues 174–201 (IARRSKTFNPGAGLPTDKKKGGPSPGDV). 2 positions are modified to phosphoserine: Ser178 and Ser197. A Glycyl lysine isopeptide (Lys-Gly) (interchain with G-Cter in SUMO2) cross-link involves residue Lys221. The tract at residues 222–255 (GLLQSGQIPGRERRSGPTDDGEEEMEEDTVTNGS) is disordered. A phosphoserine mark is found at Ser236 and Ser255. The span at 240–255 (DDGEEEMEEDTVTNGS) shows a compositional bias: acidic residues.

The protein belongs to the U2 small nuclear ribonucleoprotein A family. In terms of assembly, identified in the spliceosome B complex. Identified in the spliceosome C complex. Found in a pre-mRNA splicing complex with SFRS4, SFRS5, SNRNP70, SNRPA1, SRRM1 and SRRM2. Found in a pre-mRNA exonic splicing enhancer (ESE) complex with SNRNP70, SNRPA1, SRRM1 and TRA2B. Contributes to the binding of stem loop IV of U2 snRNA with SNRPB2.

The protein localises to the nucleus. Functionally, involved in pre-mRNA splicing as component of the spliceosome. Associated with sn-RNP U2, where it contributes to the binding of stem loop IV of U2 snRNA. The chain is U2 small nuclear ribonucleoprotein A' (SNRPA1) from Homo sapiens (Human).